The primary structure comprises 449 residues: Xylose isomerase (449 aa).

Catalysis depends on residues H103 and D106. Residues E234, E270, H273, D298, D309, D311, and D342 each contribute to the Mg(2+) site.

This sequence belongs to the xylose isomerase family. Homotetramer. Requires Mg(2+) as cofactor.

It is found in the cytoplasm. The enzyme catalyses alpha-D-xylose = alpha-D-xylulofuranose. Functionally, involved in D-xylose catabolism. This is Xylose isomerase (xylA) from Lactiplantibacillus pentosus (Lactobacillus pentosus).